The chain runs to 188 residues: Elongation factor P (188 aa).

This sequence belongs to the elongation factor P family.

The protein resides in the cytoplasm. Its pathway is protein biosynthesis; polypeptide chain elongation. Its function is as follows. Involved in peptide bond synthesis. Stimulates efficient translation and peptide-bond synthesis on native or reconstituted 70S ribosomes in vitro. Probably functions indirectly by altering the affinity of the ribosome for aminoacyl-tRNA, thus increasing their reactivity as acceptors for peptidyl transferase. The sequence is that of Elongation factor P from Chlorobium chlorochromatii (strain CaD3).